The sequence spans 1383 residues: Putative autophagy-related protein 11 (1383 aa).

2 coiled-coil regions span residues 16–49 and 117–324; these read DKNN…YELN and NLFL…QNKE. Basic and acidic residues-rich tracts occupy residues 1151-1224 and 1233-1249; these read EEEK…EDRK and HSSD…KTKE. The tract at residues 1151–1249 is disordered; that stretch reads EEEKKKNEEE…KYNKKEKTKE (99 aa).

Belongs to the ATG11 family.

Its function is as follows. Involved in cytoplasm to vacuole transport (Cvt), pexophagy, mitophagy and nucleophagy. Works as scaffold proteins that recruit ATG proteins to the pre-autophagosome (PAS), the site of vesicle/autophagosome formation. The chain is Putative autophagy-related protein 11 from Plasmodium falciparum (isolate 3D7).